A 431-amino-acid chain; its full sequence is uncharacterized protein (431 aa).

Disordered stretches follow at residues 1–37 (MFWR…KLTP) and 102–132 (PPPL…RRVA). Residues 22–32 (GDFRRSSDPRL) show a composition bias toward basic and acidic residues. Low complexity predominate over residues 106-121 (LSAGASRESAPRQPGP). The segment covering 122-132 (GERERPRRRVA) has biased composition (basic and acidic residues).

It is found in the cytoplasm. This is an uncharacterized protein from Homo sapiens (Human).